Reading from the N-terminus, the 86-residue chain is uncharacterized protein (86 aa).

The interval Met1–Glu21 is disordered. The segment covering Arg8–Lys17 has biased composition (basic residues).

This is an uncharacterized protein from Acidianus convivator (ATV).